We begin with the raw amino-acid sequence, 388 residues long: Protein SopA (388 aa).

The protein belongs to the ParA family.

Its function is as follows. This protein is essential for plasmid partition. It ensures the proper distribution of newly replicated plasmids to daughter cells during cell division. SopA is trans-acting. The protein is Protein SopA (sopA) of Escherichia coli O157:H7.